Reading from the N-terminus, the 202-residue chain is Imidazoleglycerol-phosphate dehydratase (202 aa).

The protein belongs to the imidazoleglycerol-phosphate dehydratase family.

It localises to the cytoplasm. It catalyses the reaction D-erythro-1-(imidazol-4-yl)glycerol 3-phosphate = 3-(imidazol-4-yl)-2-oxopropyl phosphate + H2O. It functions in the pathway amino-acid biosynthesis; L-histidine biosynthesis; L-histidine from 5-phospho-alpha-D-ribose 1-diphosphate: step 6/9. The polypeptide is Imidazoleglycerol-phosphate dehydratase (Acinetobacter baumannii (strain SDF)).